Here is a 62-residue protein sequence, read N- to C-terminus: Large ribosomal subunit protein bL28 (62 aa).

Residues 1 to 22 (MAKKCAISGKGPMSGNNVSHAK) form a disordered region.

Belongs to the bacterial ribosomal protein bL28 family.

The sequence is that of Large ribosomal subunit protein bL28 from Sulfurimonas denitrificans (strain ATCC 33889 / DSM 1251) (Thiomicrospira denitrificans (strain ATCC 33889 / DSM 1251)).